The following is a 32-amino-acid chain: Alcohol dehydrogenase-related 31 kDa protein (32 aa).

11–32 provides a ligand contact to NAD(+); that stretch reads YVADCGGIALETSXVLMTKNIA.

This sequence belongs to the short-chain dehydrogenases/reductases (SDR) family.

This Drosophila yakuba (Fruit fly) protein is Alcohol dehydrogenase-related 31 kDa protein (Adhr).